The primary structure comprises 380 residues: 1-deoxy-D-xylulose 5-phosphate reductoisomerase (380 aa).

Positions 10, 11, 12, 13, 36, 37, 38, and 120 each coordinate NADPH. Lysine 121 contributes to the 1-deoxy-D-xylulose 5-phosphate binding site. Glutamate 122 contributes to the NADPH binding site. Position 146 (aspartate 146) interacts with Mn(2+). Serine 147, glutamate 148, serine 172, and histidine 195 together coordinate 1-deoxy-D-xylulose 5-phosphate. Mn(2+) is bound at residue glutamate 148. Glycine 201 is a binding site for NADPH. Residues serine 208, asparagine 213, lysine 214, and glutamate 217 each coordinate 1-deoxy-D-xylulose 5-phosphate. Glutamate 217 lines the Mn(2+) pocket.

Belongs to the DXR family. Requires Mg(2+) as cofactor. It depends on Mn(2+) as a cofactor.

The catalysed reaction is 2-C-methyl-D-erythritol 4-phosphate + NADP(+) = 1-deoxy-D-xylulose 5-phosphate + NADPH + H(+). It functions in the pathway isoprenoid biosynthesis; isopentenyl diphosphate biosynthesis via DXP pathway; isopentenyl diphosphate from 1-deoxy-D-xylulose 5-phosphate: step 1/6. Catalyzes the NADPH-dependent rearrangement and reduction of 1-deoxy-D-xylulose-5-phosphate (DXP) to 2-C-methyl-D-erythritol 4-phosphate (MEP). This Bacillus cereus (strain ATCC 10987 / NRS 248) protein is 1-deoxy-D-xylulose 5-phosphate reductoisomerase.